A 142-amino-acid chain; its full sequence is Large ribosomal subunit protein uL11 (142 aa).

It belongs to the universal ribosomal protein uL11 family. As to quaternary structure, part of the ribosomal stalk of the 50S ribosomal subunit. Interacts with L10 and the large rRNA to form the base of the stalk. L10 forms an elongated spine to which L12 dimers bind in a sequential fashion forming a multimeric L10(L12)X complex. Post-translationally, one or more lysine residues are methylated.

Its function is as follows. Forms part of the ribosomal stalk which helps the ribosome interact with GTP-bound translation factors. The chain is Large ribosomal subunit protein uL11 from Pectobacterium carotovorum subsp. carotovorum (strain PC1).